A 188-amino-acid chain; its full sequence is Elongation factor P-like protein (188 aa).

It belongs to the elongation factor P family.

This Stenotrophomonas maltophilia (strain K279a) protein is Elongation factor P-like protein.